Consider the following 545-residue polypeptide: Tripartite motif-containing protein 26 (545 aa).

The RING-type zinc-finger motif lies at 16-57 (CSICLDYLRDPVTIDCGHVFCRSCTSDIRPISGNRPVCPLCK). Residues 97–138 (QDMKLCERHQEKLHYYCEDDGKLLCVMCRESREHRPHTAVLV) form a B box-type zinc finger. Zn(2+) contacts are provided by Cys-102, His-105, Cys-124, and His-130. The stretch at 197–243 (QFLKKREQHLLDQLATLEQLLTEGREKFKTRGVSELDRLTLVISELE) forms a coiled coil. Residues 301 to 545 (RGLRQFQGKL…WPGARLLLRP (245 aa)) form the B30.2/SPRY domain. A disordered region spans residues 382–443 (REGWSEDEEE…EEEEEVQESC (62 aa)). The span at 386-440 (SEDEEEGEEEEEGEEEEEDEEVGYGDGYEDWETDEEDESLGEEEEEEEEEEEEVQ) shows a compositional bias: acidic residues.

Belongs to the TRIM/RBCC family. In terms of assembly, interacts with TBK1; this interaction bridges together TBK1 and NEMO in order to activate TBK1. Interacts with INCA1. Post-translationally, autoubiquitinates upon viral infection. In turn, autoubiquitinated TRIM26 recruits NEMO and bridges TBK1-NEMO interaction.

It is found in the cytoplasm. The protein resides in the nucleus. It catalyses the reaction S-ubiquitinyl-[E2 ubiquitin-conjugating enzyme]-L-cysteine + [acceptor protein]-L-lysine = [E2 ubiquitin-conjugating enzyme]-L-cysteine + N(6)-ubiquitinyl-[acceptor protein]-L-lysine.. Functionally, E3 ubiquitin-protein ligase which regulates the IFN-beta production and antiviral response downstream of various DNA-encoded pattern-recognition receptors (PRRs). Also plays a central role in determining the response to different forms of oxidative stress by controlling levels of DNA glycosylases NEIL1, NEIL3 and NTH1 that are involved in repair of damaged DNA. Promotes nuclear IRF3 ubiquitination and proteasomal degradation. Bridges together TBK1 and NEMO during the innate response to viral infection leading to the activation of TBK1. Positively regulates LPS-mediated inflammatory innate immune response by catalyzing the 'Lys-11'-linked polyubiquitination of TAB1 to enhance its activation and subsequent NF-kappa-B and MAPK signaling. In a manner independent of its catalytic activity, inhibits WWP2, a SOX2-directed E3 ubiquitin ligase, and thus protects SOX2 from polyubiquitination and proteasomal degradation. Ubiquitinates the histone acetyltransferase protein complex component PHF20 and thereby triggers its degradation in the nucleus after its recruitment by the histone demethylase KDM6B, serving as a scaffold protein. Upon induction by TGF-beta, ubiquitinates the TFIID component TAF7 for proteasomal degradation. Induces ferroptosis by ubiquitinating SLC7A11, a critical protein for lipid reactive oxygen species (ROS) scavenging. This Mus musculus (Mouse) protein is Tripartite motif-containing protein 26 (Trim26).